We begin with the raw amino-acid sequence, 273 residues long: Phosphate import ATP-binding protein PstB (273 aa).

In terms of domain architecture, ABC transporter spans 19–258; sequence LSLQNVTISY…FNDTDKIFNA (240 aa). Residue 51–58 coordinates ATP; sequence GPSGCGKS.

Belongs to the ABC transporter superfamily. Phosphate importer (TC 3.A.1.7) family. The complex is composed of two ATP-binding proteins (PstB), two transmembrane proteins (PstC and PstA) and a solute-binding protein (PstS).

It is found in the cell inner membrane. The catalysed reaction is phosphate(out) + ATP + H2O = ADP + 2 phosphate(in) + H(+). Its function is as follows. Part of the ABC transporter complex PstSACB involved in phosphate import. Responsible for energy coupling to the transport system. The chain is Phosphate import ATP-binding protein PstB from Synechococcus sp. (strain CC9605).